The chain runs to 245 residues: tRNA (guanine-N(1)-)-methyltransferase (245 aa).

S-adenosyl-L-methionine is bound by residues Gly-111 and 131–136 (MGDYVL).

It belongs to the RNA methyltransferase TrmD family. In terms of assembly, homodimer.

The protein localises to the cytoplasm. The enzyme catalyses guanosine(37) in tRNA + S-adenosyl-L-methionine = N(1)-methylguanosine(37) in tRNA + S-adenosyl-L-homocysteine + H(+). In terms of biological role, specifically methylates guanosine-37 in various tRNAs. This Staphylococcus aureus (strain MRSA252) protein is tRNA (guanine-N(1)-)-methyltransferase.